Consider the following 600-residue polypeptide: MALNLLSSLPAACNFTRLSLPLSSKVNGFVPPITQVQYPMAASTSSIKPVDQTIIRRSADYGPTIWSFDYIQSLDSKYKGESYARQLEKLKEQVSAMLQQDNKVVDLDPLHQLELIDNLHRLGVSYHFEDEIKRTLDRIHNKNTNKSLYARALKFRILRQYGYKTPVKETFSRFMDEKGSFKLSSHSDECKGMLALYEAAYLLVEEESSIFRDAIRFTTAYLKEWVAKHDIDKNDNEYLCTLVKHALELPLHWRMRRLEARWFIDVYESGPDMNPILLELAKVDYNIVQAVHQEDLKYVSRWWKKTGLGEKLNFARDRVVENFFWTVGDIFEPQFGYCRRMSAMVNCLLTSIDDVYDVYGTLDELELFTDAVERWDATTTEQLPYYMKLCFHALYNSVNEMGFIALRDQEVGMIIPYLKKAWADQCKSYLVEAKWYNSGYIPTLQEYMENAWISVTAPVMLLHAYAFTANPITKEALEFLQDSPDIIRISSMIVRLEDDLGTSSDELKRGDVPKSIQCYMHETGVSEDEAREHIRDLIAETWMKMNSARFGNPPYLPDVFIGIAMNLVRMSQCMYLYGDGHGVQENTKDRVLSLFIDPIP.

Residues 1–40 (MALNLLSSLPAACNFTRLSLPLSSKVNGFVPPITQVQYPM) constitute a chloroplast transit peptide. Residues Asp353, Asp357, Asp498, and Glu506 each contribute to the Mg(2+) site. The short motif at 353-357 (DDVYD) is the DDXXD motif element.

It belongs to the terpene synthase family. It depends on Mn(2+) as a cofactor. The cofactor is Mg(2+).

The protein resides in the plastid. It is found in the chloroplast. It catalyses the reaction (2E)-geranyl diphosphate = gamma-terpinene + diphosphate. Its pathway is secondary metabolite biosynthesis; terpenoid biosynthesis. Its activity is regulated as follows. Inhibited by 100 mM KCl. In terms of biological role, monoterpene synthase which catalyzes the conversion of geranyl diphosphate to gamma-terpinene and the minor products limonene, alpha-pinene, beta-pinene, alpha-terpinolene, alpha-thujene, alpha-terpinene, myrcene and sabinene. This chain is Gamma-terpinene synthase, chloroplastic, found in Citrus limon (Lemon).